The sequence spans 474 residues: Polyamine oxidase 7 (474 aa).

A signal peptide spans 1-27 (MTKPTTMAIFLSIVLLSMAQLPSLVAG). The FAD site is built by Glu61 and Arg69. Residues Asn103 and Asn150 are each glycosylated (N-linked (GlcNAc...) asparagine). Position 261 (Val261) interacts with FAD. N-linked (GlcNAc...) asparagine glycosylation occurs at Asn278. Glu454 provides a ligand contact to FAD.

Belongs to the flavin monoamine oxidase family. The cofactor is FAD.

Its subcellular location is the secreted. The protein resides in the extracellular space. It localises to the apoplast. The enzyme catalyses spermine + O2 + H2O = 3-aminopropanal + spermidine + H2O2. The catalysed reaction is N(1)-acetylspermine + O2 + H2O = 3-acetamidopropanal + spermidine + H2O2. It carries out the reaction norspermine + O2 + H2O = norspermidine + 3-aminopropanal + H2O2. It catalyses the reaction spermidine + O2 + H2O = 3-aminopropanal + putrescine + H2O2. The enzyme catalyses N(1)-acetylspermidine + O2 + H2O = 3-acetamidopropanal + putrescine + H2O2. The catalysed reaction is thermospermine + O2 + H2O = 3-aminopropanal + spermidine + H2O2. It participates in amine and polyamine degradation; spermidine degradation. Its pathway is amine and polyamine degradation; spermine degradation. In terms of biological role, flavoenzyme involved in polyamine back-conversion. Catalyzes the oxidation of the secondary amino group of polyamines, such as spermine, spermidine and their acetyl derivatives. Substrate preference is spermine &gt; spermidine &gt; N(1)-acetylspermine &gt; N(1)-acetylspermidine &gt; norspermine &gt; thermospermine. No activity detected when putrescine is used as substrate. May play a role in producing hydrogen peroxide for secondary wall thickening through lignin formation during anther development. The polypeptide is Polyamine oxidase 7 (Oryza sativa subsp. japonica (Rice)).